Consider the following 814-residue polypeptide: ATP-dependent 6-phosphofructokinase 1 (814 aa).

The interval 1-420 is N-terminal catalytic PFK domain 1; that stretch reads MDADASTITP…NLETYKLLTK (420 aa). ATP is bound by residues G55, 118–119, and 148–151; these read RS and GDGS. D149 serves as a coordination point for Mg(2+). Residues 194–196, R231, 238–240, E294, R322, and 328–331 each bind substrate; these read SID, MGR, and HVQR. D196 serves as the catalytic Proton acceptor. Positions 421–435 are interdomain linker; it reads MRTVEKDNLSEGHKF. Residues 436-814 are C-terminal regulatory PFK domain 2; sequence NVAVINVGAP…EEESADSHMF (379 aa). Beta-D-fructose 2,6-bisphosphate contacts are provided by residues K505, 563 to 567, R601, 608 to 610, E664, R690, 696 to 699, and R771; these read TISNN, MGG, and HVQQ.

It belongs to the phosphofructokinase type A (PFKA) family. ATP-dependent PFK group I subfamily. Eukaryotic two domain clade 'E' sub-subfamily. As to quaternary structure, homotetramer. It depends on Mg(2+) as a cofactor.

The protein localises to the cytoplasm. The enzyme catalyses beta-D-fructose 6-phosphate + ATP = beta-D-fructose 1,6-bisphosphate + ADP + H(+). Its pathway is carbohydrate degradation; glycolysis; D-glyceraldehyde 3-phosphate and glycerone phosphate from D-glucose: step 3/4. Its activity is regulated as follows. Allosterically activated by ADP, AMP, or fructose 2,6-bisphosphate, and allosterically inhibited by ATP or citrate. Functionally, catalyzes the phosphorylation of D-fructose 6-phosphate to fructose 1,6-bisphosphate by ATP, the first committing step of glycolysis. In Caenorhabditis elegans, this protein is ATP-dependent 6-phosphofructokinase 1.